The sequence spans 587 residues: MKSSAAKQTVLCLNRYAVVALPLAIASFAAFGASPASTLWAPTDTKAFVTPAQVEARSAAPLLELAAGETAHIVVSLKLRDEAQLKQLAQAVNQPGNAQFGKFLKRRQFLSQFAPTEAQVQAVVAHLRKNGFVNIHVVPNRLLISADGSAGAVKAAFNTPLVRYQLNGKAGYANTAPAQVPQDLGEIVGSVLGLQNVTRAHPMLKVGERSAAKTLAAGTAKGHNPTEFPTIYDASSAPTAANTTVGIITIGGVSQTLQDLQQFTSANGLASVNTQTIQTGSSNGDYSDDQQGQGEWDLDSQSIVGSAGGAVQQLLFYMADQSASGNTGLTQAFNQAVSDNVAKVINVSLGWCEADANADGTLQAEDRIFATAAAQGQTFSVSSGDEGVYECNNRGYPDGSTYSVSWPASSPNVIAVGGTTLYTTSAGAYSNETVWNEGLDSNGKLWATGGGYSVYESKPSWQSVVSGTPGRRLLPDISFDAAQGTGALIYNYGQLQQIGGTSLASPIFVGLWARLQSANSNSLGFPAASFYSAISSTPSLVHDVKSGNNGYGGYGYNAGTGWDYPTGWGSLDIAKLSAYIRSNGFGH.

The N-terminal stretch at 1–32 is a signal peptide; it reads MKSSAAKQTVLCLNRYAVVALPLAIASFAAFG. Positions 33-215 are cleaved as a propeptide — removed in mature form; that stretch reads ASPASTLWAP…VGERSAAKTL (183 aa). Residues 219 to 583 form the Peptidase S53 domain; sequence TAKGHNPTEF…AKLSAYIRSN (365 aa). A disordered region spans residues 276–295; sequence TIQTGSSNGDYSDDQQGQGE. Active-site charge relay system residues include Glu-295 and Asp-299. A disulfide bridge connects residues Cys-352 and Cys-391. The active-site Charge relay system is Ser-502. Residues Asp-543, Val-544, Gly-559, Gly-561, and Asp-563 each coordinate Ca(2+). Positions 586–587 are cleaved as a propeptide — removed in mature form; it reads GH.

The cofactor is Ca(2+). In terms of processing, autocatalytically processed.

The protein localises to the periplasm. The enzyme catalyses Hydrolysis of the B chain of insulin at 13-Glu-|-Ala-14, 15-Leu-|-Tyr-16 and 25-Phe-|-Tyr-26 and angiotensin I at 4-Tyr-|-Ile-5. A good synthetic substrate is Lys-Pro-Ile-Glu-Phe-|-Phe(NO2)-Arg-Leu.. With respect to regulation, inhibited by 1,2-epoxy-3-(p-nitrophenoxy)propane (EPNP), but not by carboxyl proteinase inhibitors, such as pepstatin, pepstatin Ac (S-PI) and diazoacetyl-DL-norleucine methyl ester (DAN). Inhibited by tyrostatin, pseudo-tyrostatin, AcIPF, AcIAF, chymostatin and pseudo-iodotyrostatin. Pepstatin-insensitive serine-carboxyl proteinase. In vitro can hydrolyze various synthetic peptides. Also shows activity on acid-denatured hemoglobin and on casein. The sequence is that of Sedolisin (pcp) from Pseudomonas sp. (strain 101) (Achromobacter parvulus T1).